Reading from the N-terminus, the 432-residue chain is Pentatricopeptide repeat-containing protein 2, mitochondrial (432 aa).

Residues 1 to 33 (MQFIKRTFPRRAFVDLLLNRFCLREFATTYSVS) constitute a mitochondrion transit peptide. PPR repeat units lie at residues 108-142 (KTVAYNLVLQYHLAKGHYNAAWSLYNDMKKRQQKP), 143-179 (SDHTYSILLKGFCDAIEKNKQGNFSKLREYSEKVTAS), 360-394 (NLQVYHEKLRNLVQQGQAAECLNTIKRMSHNGPFP), and 395-429 (TQQTFLIVLSLCKRPKFYSYTKSFLDLAKKLNVPV).

Its subcellular location is the mitochondrion. Functionally, mitochondrial RNA-binding protein that acts as a general translation factor. Plays a critical role in the synthesis of all mitochondrial DNA-encoded oxidative phosphorylation subunits, which are essential for mitochondrial respiration. Essential for the expression of iron-sulfur cluster (ISC) proteins as well as other heme proteins related to iron-sensing, and thus plays a key role in iron homeostasis. This Schizosaccharomyces pombe (strain 972 / ATCC 24843) (Fission yeast) protein is Pentatricopeptide repeat-containing protein 2, mitochondrial.